The primary structure comprises 233 residues: Pathogenesis-related thaumatin-like protein 3.2 (233 aa).

A signal peptide spans 1-22 (MARAMHTVWIALVPTLFVFLQG). 8 disulfide bridges follow: cysteine 36–cysteine 232, cysteine 77–cysteine 87, cysteine 92–cysteine 98, cysteine 145–cysteine 221, cysteine 151–cysteine 204, cysteine 159–cysteine 169, cysteine 173–cysteine 182, and cysteine 183–cysteine 191. An N-linked (GlcNAc...) asparagine glycan is attached at asparagine 195.

The protein belongs to the thaumatin family. In terms of tissue distribution, strongly expressed in roots and in female and male strobili, and, to a lower extent, in cotyledons, leaves, stems and pollen grains.

In terms of biological role, may be involved in disease resistance. The protein is Pathogenesis-related thaumatin-like protein 3.2 of Cryptomeria japonica (Japanese cedar).